The chain runs to 152 residues: Phosphoribosyl-AMP cyclohydrolase (152 aa).

Asp92 lines the Mg(2+) pocket. Zn(2+) is bound at residue Cys93. Residues Asp94 and Asp96 each contribute to the Mg(2+) site. The Zn(2+) site is built by Cys111 and Cys118.

It belongs to the PRA-CH family. As to quaternary structure, homodimer. It depends on Mg(2+) as a cofactor. The cofactor is Zn(2+).

The protein localises to the cytoplasm. The enzyme catalyses 1-(5-phospho-beta-D-ribosyl)-5'-AMP + H2O = 1-(5-phospho-beta-D-ribosyl)-5-[(5-phospho-beta-D-ribosylamino)methylideneamino]imidazole-4-carboxamide. It functions in the pathway amino-acid biosynthesis; L-histidine biosynthesis; L-histidine from 5-phospho-alpha-D-ribose 1-diphosphate: step 3/9. Its function is as follows. Catalyzes the hydrolysis of the adenine ring of phosphoribosyl-AMP. The sequence is that of Phosphoribosyl-AMP cyclohydrolase from Sinorhizobium fredii (strain NBRC 101917 / NGR234).